The primary structure comprises 157 residues: Cyclic pyranopterin monophosphate synthase (157 aa).

Residues methionine 74–histidine 76 and methionine 112–glutamate 113 each bind substrate. Residue aspartate 127 is part of the active site.

Belongs to the MoaC family. As to quaternary structure, homohexamer; trimer of dimers.

The catalysed reaction is (8S)-3',8-cyclo-7,8-dihydroguanosine 5'-triphosphate = cyclic pyranopterin phosphate + diphosphate. The protein operates within cofactor biosynthesis; molybdopterin biosynthesis. Functionally, catalyzes the conversion of (8S)-3',8-cyclo-7,8-dihydroguanosine 5'-triphosphate to cyclic pyranopterin monophosphate (cPMP). This chain is Cyclic pyranopterin monophosphate synthase, found in Campylobacter jejuni subsp. doylei (strain ATCC BAA-1458 / RM4099 / 269.97).